We begin with the raw amino-acid sequence, 453 residues long: UDP-N-acetylmuramoylalanine--D-glutamate ligase (453 aa).

Glycine 119–threonine 125 is an ATP binding site.

It belongs to the MurCDEF family.

The protein localises to the cytoplasm. The enzyme catalyses UDP-N-acetyl-alpha-D-muramoyl-L-alanine + D-glutamate + ATP = UDP-N-acetyl-alpha-D-muramoyl-L-alanyl-D-glutamate + ADP + phosphate + H(+). Its pathway is cell wall biogenesis; peptidoglycan biosynthesis. Its function is as follows. Cell wall formation. Catalyzes the addition of glutamate to the nucleotide precursor UDP-N-acetylmuramoyl-L-alanine (UMA). The chain is UDP-N-acetylmuramoylalanine--D-glutamate ligase from Streptococcus uberis (strain ATCC BAA-854 / 0140J).